Reading from the N-terminus, the 223-residue chain is Nitrate reductase gamma chain (223 aa).

The helical transmembrane segment at Ser-2–Gln-27 threads the bilayer. The Cytoplasmic portion of the chain corresponds to His-28–Lys-45. Residues Leu-46 to Ile-68 traverse the membrane as a helical segment. The heme b site is built by His-54 and His-64. The Extracellular portion of the chain corresponds to Leu-69–Ser-81. A helical transmembrane segment spans residues Glu-82 to Arg-111. Residues Leu-112–Pro-123 lie on the Cytoplasmic side of the membrane. Residues Ser-124–Ile-147 form a helical membrane-spanning segment. The Extracellular portion of the chain corresponds to Asp-148–Leu-180. The chain crosses the membrane as a helical span at residues Trp-181–Trp-196. The heme b site is built by His-185 and His-203. The Cytoplasmic segment spans residues Pro-197 to Ser-223.

Heme is required as a cofactor.

The protein resides in the cell membrane. It catalyses the reaction nitrate + a quinol = a quinone + nitrite + H2O. The gamma chain is a membrane-embedded heme-iron unit resembling cytochrome b, which transfers electrons from quinones to the beta subunit. This Bacillus subtilis (strain 168) protein is Nitrate reductase gamma chain (narI).